The primary structure comprises 333 residues: Holliday junction branch migration complex subunit RuvB (333 aa).

The large ATPase domain (RuvB-L) stretch occupies residues 1–181; it reads MNDILNKEPM…FGISSHMEYY (181 aa). ATP is bound by residues Leu-20, Arg-21, Gly-62, Lys-65, Thr-66, Thr-67, 128–130, Arg-171, Tyr-181, and Arg-218; that span reads EDF. Thr-66 is a Mg(2+) binding site. Residues 182 to 252 are small ATPAse domain (RuvB-S); that stretch reads QERDLEEIVK…ITDKALTILD (71 aa). Residues 255-333 form a head domain (RuvB-H) region; that stretch reads AAGLDYIDQK…HLGYVYNEEE (79 aa). 3 residues coordinate DNA: Arg-291, Arg-310, and Arg-315.

This sequence belongs to the RuvB family. As to quaternary structure, homohexamer. Forms an RuvA(8)-RuvB(12)-Holliday junction (HJ) complex. HJ DNA is sandwiched between 2 RuvA tetramers; dsDNA enters through RuvA and exits via RuvB. An RuvB hexamer assembles on each DNA strand where it exits the tetramer. Each RuvB hexamer is contacted by two RuvA subunits (via domain III) on 2 adjacent RuvB subunits; this complex drives branch migration. In the full resolvosome a probable DNA-RuvA(4)-RuvB(12)-RuvC(2) complex forms which resolves the HJ.

The protein resides in the cytoplasm. It catalyses the reaction ATP + H2O = ADP + phosphate + H(+). The RuvA-RuvB-RuvC complex processes Holliday junction (HJ) DNA during genetic recombination and DNA repair, while the RuvA-RuvB complex plays an important role in the rescue of blocked DNA replication forks via replication fork reversal (RFR). RuvA specifically binds to HJ cruciform DNA, conferring on it an open structure. The RuvB hexamer acts as an ATP-dependent pump, pulling dsDNA into and through the RuvAB complex. RuvB forms 2 homohexamers on either side of HJ DNA bound by 1 or 2 RuvA tetramers; 4 subunits per hexamer contact DNA at a time. Coordinated motions by a converter formed by DNA-disengaged RuvB subunits stimulates ATP hydrolysis and nucleotide exchange. Immobilization of the converter enables RuvB to convert the ATP-contained energy into a lever motion, pulling 2 nucleotides of DNA out of the RuvA tetramer per ATP hydrolyzed, thus driving DNA branch migration. The RuvB motors rotate together with the DNA substrate, which together with the progressing nucleotide cycle form the mechanistic basis for DNA recombination by continuous HJ branch migration. Branch migration allows RuvC to scan DNA until it finds its consensus sequence, where it cleaves and resolves cruciform DNA. The polypeptide is Holliday junction branch migration complex subunit RuvB (Lactococcus lactis subsp. cremoris (strain SK11)).